The following is a 120-amino-acid chain: Large ribosomal subunit protein bL36m (120 aa).

This sequence belongs to the bacterial ribosomal protein bL36 family. As to quaternary structure, component of the mitochondrial ribosome large subunit (39S) which comprises a 16S rRNA and about 50 distinct proteins.

The protein resides in the mitochondrion. In Osmerus mordax (Rainbow smelt), this protein is Large ribosomal subunit protein bL36m (mrpl36).